A 593-amino-acid polypeptide reads, in one-letter code: MSQTNYIPSTPNKSTPPSELSSTPIDENDIGLLVSLNQEISSNIHVKIKIEENITIGRSKTCNIVVPELIVSGKHCIITRADAIENGNTNYGLLMIQDQSTNGTFINGKLIGKGKSRLLKNGDKLCLGKSTKEIDISFLYKSNYSNQLLLSSSTNNLNNSGTAQYIWERKDIKDDILKDYDFIKELGSGNFSVVYEGVNKNTGKRVAIKHLNLSKINTHTPKFKSQLNREIEILKFINHENVVEIYDIFYTKDQQLFFILELANGGELYNKIGFNEPLLNENQSKFIFKQILNAVSYLHSKGIAHRDLKPENILFDSYGDDYLKIKITDFGLARFIHEGELAKTLCGSPLYVAPEVILSLHHKNKYGTNSSSSSQSPTKDINSVGYGKSCDAWSLGAILYIVLCGTPPFDDDDDEEMSTPQLFEKIVSGNYRVEKLEKSLISSSAADLVKGLLTVDPDKRLTVEQALNHPWITEINNNSNNNNNNINNNSSNINIIKKSPLKTVNTNNNNNNCKLSSPIKNSSKLKRNLSNEPLNNNISNNNNTQTSFTGSLLNQLQLNEGELLKKRKTFLSNNDQKENINPVINNPFLKSSQ.

Residues 1–24 (MSQTNYIPSTPNKSTPPSELSSTP) are disordered. Positions 54–111 (ITIGRSKTCNIVVPELIVSGKHCIITRADAIENGNTNYGLLMIQDQSTNGTFINGKLI) constitute an FHA domain. Residues 180-472 (YDFIKELGSG…VEQALNHPWI (293 aa)) form the Protein kinase domain. ATP contacts are provided by residues 186–194 (LGSGNFSVV) and Lys209. The active-site Proton acceptor is the Asp307.

Belongs to the protein kinase superfamily. CAMK Ser/Thr protein kinase family. CHK2 subfamily.

The enzyme catalyses L-seryl-[protein] + ATP = O-phospho-L-seryl-[protein] + ADP + H(+). It carries out the reaction L-threonyl-[protein] + ATP = O-phospho-L-threonyl-[protein] + ADP + H(+). The sequence is that of Probable serine/threonine-protein kinase fhkA (fhkA) from Dictyostelium discoideum (Social amoeba).